The chain runs to 629 residues: uncharacterized protein (629 aa).

The active-site Proton acceptor is the His-562.

It belongs to the GMC oxidoreductase family. It depends on FAD as a cofactor.

This is an uncharacterized protein from Mycobacterium tuberculosis (strain CDC 1551 / Oshkosh).